Here is a 299-residue protein sequence, read N- to C-terminus: Dermonecrotic toxin LiSicTox-alphaIVA1 (299 aa).

Residues 1–18 (MLFPTALIFGCWALVIEG) form the signal peptide. Residue H30 is part of the active site. E50 and D52 together coordinate Mg(2+). Catalysis depends on H66, which acts as the Nucleophile. 2 cysteine pairs are disulfide-bonded: C70–C76 and C72–C217. D110 serves as a coordination point for Mg(2+).

It belongs to the arthropod phospholipase D family. Class II subfamily. Class IIa sub-subfamily. It depends on Mg(2+) as a cofactor. Expressed by the venom gland.

The protein resides in the secreted. The catalysed reaction is an N-(acyl)-sphingosylphosphocholine = an N-(acyl)-sphingosyl-1,3-cyclic phosphate + choline. The enzyme catalyses an N-(acyl)-sphingosylphosphoethanolamine = an N-(acyl)-sphingosyl-1,3-cyclic phosphate + ethanolamine. It catalyses the reaction a 1-acyl-sn-glycero-3-phosphocholine = a 1-acyl-sn-glycero-2,3-cyclic phosphate + choline. It carries out the reaction a 1-acyl-sn-glycero-3-phosphoethanolamine = a 1-acyl-sn-glycero-2,3-cyclic phosphate + ethanolamine. Dermonecrotic toxins cleave the phosphodiester linkage between the phosphate and headgroup of certain phospholipids (sphingolipid and lysolipid substrates), forming an alcohol (often choline) and a cyclic phosphate. This toxin acts on sphingomyelin (SM) with high activity. It may also act on ceramide phosphoethanolamine (CPE), lysophosphatidylcholine (LPC) and lysophosphatidylethanolamine (LPE), but not on lysophosphatidylserine (LPS), and lysophosphatidylglycerol (LPG). It acts by transphosphatidylation, releasing exclusively cyclic phosphate products as second products. Has hemolytic activity in human erythrocytes in a dose-dependent manner. In vivo, this toxin induces dermonecrosis, edema, hemorrhage, massive inflammatory response, as well as vascular permeability. In addition, thrombus formation has also been detected in dermal blood vessels. It also induces platelet aggregation. It is noteworthy that a Glu-248 replaces the Asp present in paralogs, without decrease in catalytic and hemolytic activities. The polypeptide is Dermonecrotic toxin LiSicTox-alphaIVA1 (Loxosceles intermedia (Brown spider)).